The chain runs to 461 residues: MPKMFGTDGVRGLANRDLTARLALDLGDAAVRVLGDAGTQDDQPEGRRRALVGRDTRVSGDFLASALSAGMSAGGFDVIDAGIIPTPGVAYLTSVLNVEIGAVISASHNPMPDNGIKFFARGGFKLPDQKEDDIEAVLGQDWDRPTGAGVGRVSHDQTTATNLYIDHLVATIAPLNDDKTQPKPLKGLKIVADCANGATSVVAPEALRRAGADVIVINASPDGYNINKNAGSTHPEQLQAMVKATDAVMGVAFDGDADRCLAVDEDGNMINGDQIMGILARAKQREGKLNHDTLVVTVMSNLGLKLALKDMGIKTVETAVGDRYVLEEMLKGGYSLGGEQSGHVINREFATTGDGTLTALTLCNEVVKSGKSLKELAADFPQLPQTLINVPNVDKKAAATNKRIQDAVAREEELLGDTGRVLLRPSGTEPLVRVMAEAATQAYADEVCTRLAKIVAEELAL.

Ser107 serves as the catalytic Phosphoserine intermediate. The Mg(2+) site is built by Ser107, Asp254, Asp256, and Asp258. Ser107 carries the phosphoserine modification.

Belongs to the phosphohexose mutase family. Mg(2+) is required as a cofactor. Post-translationally, activated by phosphorylation.

It carries out the reaction alpha-D-glucosamine 1-phosphate = D-glucosamine 6-phosphate. In terms of biological role, catalyzes the conversion of glucosamine-6-phosphate to glucosamine-1-phosphate. The polypeptide is Phosphoglucosamine mutase (Bifidobacterium longum subsp. infantis (strain ATCC 15697 / DSM 20088 / JCM 1222 / NCTC 11817 / S12)).